Reading from the N-terminus, the 120-residue chain is UPF0102 protein TWT_455 (120 aa).

Belongs to the UPF0102 family.

In Tropheryma whipplei (strain Twist) (Whipple's bacillus), this protein is UPF0102 protein TWT_455.